Reading from the N-terminus, the 197-residue chain is Putative peptidyl-prolyl cis-trans isomerase (197 aa).

The PPIase cyclophilin-type domain occupies 14–195 (NEIKVVMHTN…YDVVIESIDV (182 aa)).

The protein belongs to the cyclophilin-type PPIase family.

It carries out the reaction [protein]-peptidylproline (omega=180) = [protein]-peptidylproline (omega=0). Its function is as follows. PPIases accelerate the folding of proteins. It catalyzes the cis-trans isomerization of proline imidic peptide bonds in oligopeptides. This is Putative peptidyl-prolyl cis-trans isomerase from Staphylococcus epidermidis (strain ATCC 35984 / DSM 28319 / BCRC 17069 / CCUG 31568 / BM 3577 / RP62A).